The following is a 335-amino-acid chain: Flagellar P-ring protein (335 aa).

The first 17 residues, 1 to 17 (MNKLMLMLITFATSLLA), serve as a signal peptide directing secretion.

It belongs to the FlgI family. In terms of assembly, the basal body constitutes a major portion of the flagellar organelle and consists of four rings (L,P,S, and M) mounted on a central rod.

The protein localises to the periplasm. It localises to the bacterial flagellum basal body. Functionally, assembles around the rod to form the L-ring and probably protects the motor/basal body from shearing forces during rotation. The polypeptide is Flagellar P-ring protein (flgI) (Borreliella burgdorferi (strain ATCC 35210 / DSM 4680 / CIP 102532 / B31) (Borrelia burgdorferi)).